Reading from the N-terminus, the 117-residue chain is Large ribosomal subunit protein uL18 (117 aa).

It belongs to the universal ribosomal protein uL18 family. In terms of assembly, part of the 50S ribosomal subunit; part of the 5S rRNA/L5/L18/L25 subcomplex. Contacts the 5S and 23S rRNAs.

In terms of biological role, this is one of the proteins that bind and probably mediate the attachment of the 5S RNA into the large ribosomal subunit, where it forms part of the central protuberance. This chain is Large ribosomal subunit protein uL18, found in Methylobacillus flagellatus (strain ATCC 51484 / DSM 6875 / VKM B-1610 / KT).